The primary structure comprises 223 residues: Thiamine-phosphate synthase (223 aa).

4-amino-2-methyl-5-(diphosphooxymethyl)pyrimidine-binding positions include Q47–K51 and N84. 2 residues coordinate Mg(2+): D85 and D104. Position 123 (S123) interacts with 4-amino-2-methyl-5-(diphosphooxymethyl)pyrimidine. 2-[(2R,5Z)-2-carboxy-4-methylthiazol-5(2H)-ylidene]ethyl phosphate is bound at residue T150 to T152. K153 contacts 4-amino-2-methyl-5-(diphosphooxymethyl)pyrimidine. G182 is a binding site for 2-[(2R,5Z)-2-carboxy-4-methylthiazol-5(2H)-ylidene]ethyl phosphate.

It belongs to the thiamine-phosphate synthase family. Mg(2+) serves as cofactor.

The enzyme catalyses 2-[(2R,5Z)-2-carboxy-4-methylthiazol-5(2H)-ylidene]ethyl phosphate + 4-amino-2-methyl-5-(diphosphooxymethyl)pyrimidine + 2 H(+) = thiamine phosphate + CO2 + diphosphate. It carries out the reaction 2-(2-carboxy-4-methylthiazol-5-yl)ethyl phosphate + 4-amino-2-methyl-5-(diphosphooxymethyl)pyrimidine + 2 H(+) = thiamine phosphate + CO2 + diphosphate. It catalyses the reaction 4-methyl-5-(2-phosphooxyethyl)-thiazole + 4-amino-2-methyl-5-(diphosphooxymethyl)pyrimidine + H(+) = thiamine phosphate + diphosphate. It functions in the pathway cofactor biosynthesis; thiamine diphosphate biosynthesis; thiamine phosphate from 4-amino-2-methyl-5-diphosphomethylpyrimidine and 4-methyl-5-(2-phosphoethyl)-thiazole: step 1/1. In terms of biological role, condenses 4-methyl-5-(beta-hydroxyethyl)thiazole monophosphate (THZ-P) and 2-methyl-4-amino-5-hydroxymethyl pyrimidine pyrophosphate (HMP-PP) to form thiamine monophosphate (TMP). This is Thiamine-phosphate synthase from Saccharopolyspora erythraea (strain ATCC 11635 / DSM 40517 / JCM 4748 / NBRC 13426 / NCIMB 8594 / NRRL 2338).